Here is a 328-residue protein sequence, read N- to C-terminus: Sterol-4-alpha-carboxylate 3-dehydrogenase, decarboxylating (328 aa).

The active-site Proton acceptor is Tyr145. An NAD(+)-binding site is contributed by Lys149. A helical membrane pass occupies residues Leu259–Trp279.

The protein belongs to the 3-beta-HSD family. In terms of assembly, homodimer.

It is found in the endoplasmic reticulum membrane. The protein localises to the lipid droplet. The catalysed reaction is a 3beta-hydroxysteroid-4alpha-carboxylate + NADP(+) = a 3-oxosteroid + CO2 + NADPH. The enzyme catalyses a 3beta-hydroxysteroid-4alpha-carboxylate + NAD(+) = a 3-oxosteroid + CO2 + NADH. The protein operates within steroid biosynthesis; zymosterol biosynthesis; zymosterol from lanosterol: step 4/6. In terms of biological role, catalyzes the NAD(P)(+)-dependent oxidative decarboxylation of the C4 methyl groups of 4-alpha-carboxysterols in post-squalene cholesterol biosynthesis. The sequence is that of Sterol-4-alpha-carboxylate 3-dehydrogenase, decarboxylating (nsdhl) from Dictyostelium discoideum (Social amoeba).